The following is a 626-amino-acid chain: Two-component response regulator ORR24 (626 aa).

Residues 1-22 form a disordered region; sequence MTVEERQGRVGGHGVSGGGGGR. Over residues 9–22 the composition is skewed to gly residues; that stretch reads RVGGHGVSGGGGGR. In terms of domain architecture, Response regulatory spans 30-145; that stretch reads RVLAVDDDPT…QLRTIWQHVI (116 aa). Asp-81 carries the post-translational modification 4-aspartylphosphate. Basic and acidic residues predominate over residues 151–162; the sequence is DAKNRGNDDDAG. 2 disordered regions span residues 151–215 and 402–440; these read DAKN…KKPR and PLES…RTTN. A compositionally biased stretch (acidic residues) spans 191–202; the sequence is NGDDGDDSDENS. A DNA-binding region (myb-like GARP) is located at residues 210-269; it reads TQKKPRVVWSVELHRKFVAAVNQLGIEKAVPKKILDLMNVENITRENVASHLQKYRLYLK. Polar residues predominate over residues 402–421; it reads PLESSNQQHLSRVHSSSADP.

The protein belongs to the ARR family. Type-B subfamily. In terms of processing, two-component system major event consists of a His-to-Asp phosphorelay between a sensor histidine kinase (HK) and a response regulator (RR). In plants, the His-to-Asp phosphorelay involves an additional intermediate named Histidine-containing phosphotransfer protein (HPt). This multistep phosphorelay consists of a His-Asp-His-Asp sequential transfer of a phosphate group between first a His and an Asp of the HK protein, followed by the transfer to a conserved His of the HPt protein and finally the transfer to an Asp in the receiver domain of the RR protein.

The protein resides in the nucleus. Transcriptional activator that binds specific DNA sequence. Functions as a response regulator involved in His-to-Asp phosphorelay signal transduction system. Phosphorylation of the Asp residue in the receiver domain activates the ability of the protein to promote the transcription of target genes. May directly activate some type-A response regulators in response to cytokinins. The chain is Two-component response regulator ORR24 from Oryza sativa subsp. japonica (Rice).